The sequence spans 78 residues: Exodeoxyribonuclease 7 small subunit (78 aa).

It belongs to the XseB family. As to quaternary structure, heterooligomer composed of large and small subunits.

Its subcellular location is the cytoplasm. It catalyses the reaction Exonucleolytic cleavage in either 5'- to 3'- or 3'- to 5'-direction to yield nucleoside 5'-phosphates.. Functionally, bidirectionally degrades single-stranded DNA into large acid-insoluble oligonucleotides, which are then degraded further into small acid-soluble oligonucleotides. The sequence is that of Exodeoxyribonuclease 7 small subunit from Nocardia farcinica (strain IFM 10152).